Consider the following 91-residue polypeptide: M-myrmeciitoxin-Mb3a (91 aa).

An N-terminal signal peptide occupies residues 1–21 (MKLSCLSLALAIILILAIVHS). Positions 22 to 54 (PNMEVKALADPEADAFGEANAFGEADAFAEANA) are excised as a propeptide.

Homodimer; disulfide-linked. In terms of tissue distribution, expressed by the venom gland and reservoir.

It is found in the secreted. Causes a significant and dose-dependent histamine release, probably by influencing the signal transduction of mast cells through a non-IgE-mediated pathway. This peptide does not have cytotoxic activities. This Myrmecia banksi (Jack jumper ant) protein is M-myrmeciitoxin-Mb3a.